The primary structure comprises 98 residues: Large ribosomal subunit protein uL23 (98 aa).

This sequence belongs to the universal ribosomal protein uL23 family. In terms of assembly, part of the 50S ribosomal subunit. Contacts protein L29, and trigger factor when it is bound to the ribosome.

Its function is as follows. One of the early assembly proteins it binds 23S rRNA. One of the proteins that surrounds the polypeptide exit tunnel on the outside of the ribosome. Forms the main docking site for trigger factor binding to the ribosome. This is Large ribosomal subunit protein uL23 from Frankia casuarinae (strain DSM 45818 / CECT 9043 / HFP020203 / CcI3).